A 521-amino-acid polypeptide reads, in one-letter code: NAD(P)H-quinone oxidoreductase subunit 2 (521 aa).

Transmembrane regions (helical) follow at residues 14–34 (VILP…TDLI), 42–62 (LTPA…TLQW), 79–99 (LSIV…LLSI), 109–129 (LGEF…LSGA), 132–152 (LVTI…LTGY), 167–187 (LLIG…LYGL), 207–227 (LALL…ISAV), 241–261 (PTPI…ALAI), 275–295 (WHFV…VVAL), 303–323 (LLAY…IAGT), 331–351 (VYYL…VILF), 375–395 (LGLS…GFFG), 397–417 (LYLF…LALI), and 463–483 (AGLV…NPLF).

Belongs to the complex I subunit 2 family. As to quaternary structure, NDH-1 can be composed of about 15 different subunits; different subcomplexes with different compositions have been identified which probably have different functions.

It localises to the cellular thylakoid membrane. The enzyme catalyses a plastoquinone + NADH + (n+1) H(+)(in) = a plastoquinol + NAD(+) + n H(+)(out). It catalyses the reaction a plastoquinone + NADPH + (n+1) H(+)(in) = a plastoquinol + NADP(+) + n H(+)(out). Its function is as follows. NDH-1 shuttles electrons from an unknown electron donor, via FMN and iron-sulfur (Fe-S) centers, to quinones in the respiratory and/or the photosynthetic chain. The immediate electron acceptor for the enzyme in this species is believed to be plastoquinone. Couples the redox reaction to proton translocation, and thus conserves the redox energy in a proton gradient. Cyanobacterial NDH-1 also plays a role in inorganic carbon-concentration. This is NAD(P)H-quinone oxidoreductase subunit 2 from Synechococcus elongatus (strain ATCC 33912 / PCC 7942 / FACHB-805) (Anacystis nidulans R2).